The sequence spans 477 residues: tRNA-2-methylthio-N(6)-dimethylallyladenosine synthase (477 aa).

One can recognise an MTTase N-terminal domain in the interval 9–129 (RKLHIKSYGC…LPQLLARAKT (121 aa)). Residues Cys18, Cys54, Cys92, Cys170, Cys174, and Cys177 each coordinate [4Fe-4S] cluster. In terms of domain architecture, Radical SAM core spans 156–386 (RSRGISAFVT…QLQNLIDSQQ (231 aa)). In terms of domain architecture, TRAM spans 391 to 453 (RTALGRTIDV…RYSLFGTLAS (63 aa)). Residues 454 to 477 (KPTSGEPSNHAATGGAQFQTTAGA) are disordered. Over residues 464–477 (AATGGAQFQTTAGA) the composition is skewed to low complexity.

This sequence belongs to the methylthiotransferase family. MiaB subfamily. As to quaternary structure, monomer. It depends on [4Fe-4S] cluster as a cofactor.

It localises to the cytoplasm. It carries out the reaction N(6)-dimethylallyladenosine(37) in tRNA + (sulfur carrier)-SH + AH2 + 2 S-adenosyl-L-methionine = 2-methylsulfanyl-N(6)-dimethylallyladenosine(37) in tRNA + (sulfur carrier)-H + 5'-deoxyadenosine + L-methionine + A + S-adenosyl-L-homocysteine + 2 H(+). Catalyzes the methylthiolation of N6-(dimethylallyl)adenosine (i(6)A), leading to the formation of 2-methylthio-N6-(dimethylallyl)adenosine (ms(2)i(6)A) at position 37 in tRNAs that read codons beginning with uridine. The sequence is that of tRNA-2-methylthio-N(6)-dimethylallyladenosine synthase from Nitrobacter winogradskyi (strain ATCC 25391 / DSM 10237 / CIP 104748 / NCIMB 11846 / Nb-255).